An 87-amino-acid polypeptide reads, in one-letter code: MSQVEFEMACASLKQLKGPLSDQEKLLVYSFYKQATQGDCNIPVPPATDVKAKAKWEAWMVNKGMSKMDAMRIYIAKVEELKKNETC.

The ACB domain maps to 2-87 (SQVEFEMACA…VEELKKNETC (86 aa)). An acyl-CoA-binding positions include 29-33 (YSFYK), lysine 55, and tyrosine 74.

Belongs to the ACBP family. In terms of tissue distribution, testis.

The protein localises to the cytoplasm. Its function is as follows. May be involved in the energy metabolism of the mature sperm. The polypeptide is Diazepam-binding inhibitor-like 5 (Dbil5) (Rattus norvegicus (Rat)).